A 49-amino-acid polypeptide reads, in one-letter code: Large ribosomal subunit protein bL36 (49 aa).

The protein belongs to the bacterial ribosomal protein bL36 family.

The sequence is that of Large ribosomal subunit protein bL36 from Delftia acidovorans (strain DSM 14801 / SPH-1).